Here is a 333-residue protein sequence, read N- to C-terminus: Receptor polysaccharide phosphotransferase WefC (333 aa).

It belongs to the stealth family.

Its function is as follows. Part of the type 2Gn receptor polysaccharide (RPS) biosynthesis locus. Essential for cell surface RPS production, and for synthesis of the host-like GalNAc beta 1-3Gal (Gn) motif of the RPS. Probably encodes a 1-3Gal alpha transferase. This Streptococcus gordonii protein is Receptor polysaccharide phosphotransferase WefC (wefC).